A 217-amino-acid chain; its full sequence is GTP cyclohydrolase-2 (217 aa).

A GTP-binding site is contributed by 50 to 54 (RIHSE). Zn(2+) is bound by residues cysteine 55, cysteine 66, and cysteine 68. GTP contacts are provided by residues glutamine 71, 93 to 95 (EGR), and threonine 115. Aspartate 127 acts as the Proton acceptor in catalysis. The Nucleophile role is filled by arginine 129. Threonine 150 and lysine 155 together coordinate GTP.

It belongs to the GTP cyclohydrolase II family. Zn(2+) serves as cofactor.

The enzyme catalyses GTP + 4 H2O = 2,5-diamino-6-hydroxy-4-(5-phosphoribosylamino)-pyrimidine + formate + 2 phosphate + 3 H(+). It functions in the pathway cofactor biosynthesis; riboflavin biosynthesis; 5-amino-6-(D-ribitylamino)uracil from GTP: step 1/4. Catalyzes the conversion of GTP to 2,5-diamino-6-ribosylamino-4(3H)-pyrimidinone 5'-phosphate (DARP), formate and pyrophosphate. The chain is GTP cyclohydrolase-2 from Actinobacillus succinogenes (strain ATCC 55618 / DSM 22257 / CCUG 43843 / 130Z).